The following is a 1123-amino-acid chain: MPIVDKLKEALKPGRKDSADDGELGKLLASSAKKVLLQKIEFEPASKSFSYQLEALKSKYVLLNPKTEGASRHKSGDDPPARRQGSEHTYESCGDGVPAPQKVLFPTERLSLRWERVFRVGAGLHNLGNTCFLNATIQCLTYTPPLANYLLSKEHARSCHQGSFCMLCVMQNHIVQAFANSGNAIKPVSFIRDLKKIARHFRFGNQEDAHEFLRYTIDAMQKACLNGCAKLDRQTQATTLVHQIFGGYLRSRVKCSVCKSVSDTYDPYLDVALEIRQAANIVRALELFVKADVLSGENAYMCAKCKKKVPASKRFTIHRTSNVLTLSLKRFANFSGGKITKDVGYPEFLNIRPYMSQNNGDPVMYGLYAVLVHSGYSCHAGHYYCYVKASNGQWYQMNDSLVHSSNVKVVLNQQAYVLFYLRIPGSKKSPEGLISRTGSSSLPGRPSVIPDHSKKNIGNGIISSPLTGKRQDSGTMKKPHTTEEIGVPISRNGSTLGLKSQNGCIPPKLPSGSPSPKLSQTPTHMPTILDDPGKKVKKPAPPQHFSPRTAQGLPGTSNSNSSRSGSQRQGSWDSRDVVLSTSPKLLATATANGHGLKGNDESAGLDRRGSSSSSPEHSASSDSTKAPQTPRSGAAHLCDSQETNCSTAGHSKTPPSGADSKTVKLKSPVLSNTTTEPASTMSPPPAKKLALSAKKASTLWRATGNDLRPPPPSPSSDLTHPMKTSHPVVASTWPVHRARAVSPAPQSSSRLQPPFSPHPTLLSSTPKPPGTSEPRSCSSISTALPQVNEDLVSLPHQLPEASEPPQSPSEKRKKTFVGEPQRLGSETRLPQHIREATAAPHGKRKRKKKKRPEDTAASALQEGQTQRQPGSPMYRREGQAQLPAVRRQEDGTQPQVNGQQVGCVTDGHHASSRKRRRKGAEGLGEEGGLHQDPLRHSCSPMGDGDPEAMEESPRKKKKKKRKQETQRAVEEDGHLKCPRSAKPQDAVVPESSSCAPSANGWCPGDRMGLSQAPPVSWNGERESDVVQELLKYSSDKAYGRKVLTWDGKMSAVSQDAIEDSRQARTETVVDDWDEEFDRGKEKKIKKFKREKRRNFNAFQKLQTRRNFWSVTHPAKAASLSYRR.

Basic and acidic residues-rich tracts occupy residues 1–19 (MPIV…KDSA) and 69–90 (GASR…EHTY). Disordered regions lie at residues 1–22 (MPIV…ADDG) and 67–95 (TEGA…SCGD). The USP domain maps to 122-423 (AGLHNLGNTC…QAYVLFYLRI (302 aa)). C131 serves as the catalytic Nucleophile. H382 acts as the Proton acceptor in catalysis. Phosphoserine occurs at positions 429 and 464. The tract at residues 430 to 577 (PEGLISRTGS…RQGSWDSRDV (148 aa)) is disordered. Positions 491–503 (RNGSTLGLKSQNG) are enriched in polar residues. Low complexity predominate over residues 510–519 (PSGSPSPKLS). Position 546 is a phosphoserine (S546). Positions 557-571 (SNSNSSRSGSQRQGS) are enriched in low complexity. Phosphoserine is present on S582. The disordered stretch occupies residues 589–999 (ATANGHGLKG…ESSSCAPSAN (411 aa)). The span at 597 to 609 (KGNDESAGLDRRG) shows a compositional bias: basic and acidic residues. Positions 610 to 623 (SSSSSPEHSASSDS) are enriched in low complexity. Residues 640–654 (SQETNCSTAGHSKTP) are compositionally biased toward polar residues. A Phosphoserine modification is found at S667. Residues 669-681 (VLSNTTTEPASTM) show a composition bias toward polar residues. The residue at position 682 (S682) is a Phosphoserine. Low complexity predominate over residues 687-697 (KKLALSAKKAS). Phosphoserine occurs at positions 713 and 742. The segment covering 773–785 (EPRSCSSISTALP) has biased composition (polar residues). The segment covering 841–850 (HGKRKRKKKK) has biased composition (basic residues). Residues 891–902 (GTQPQVNGQQVG) show a composition bias toward polar residues. At S952 the chain carries Phosphoserine. Basic and acidic residues predominate over residues 963 to 975 (QETQRAVEEDGHL).

It belongs to the peptidase C19 family. As to quaternary structure, interacts with isoform 3 of FBXW7; the interaction inhibits MYC degradation induced by SCF(FBW7) complex. Interacts with NTRK1; USP36 does not deubiquitinate NTRK1. Interacts with NEDD4L (via domains WW1, 3 and 4); the interaction inhibits ubiquitination of, at least, NTRK1, KCNQ2 and KCNQ3 by NEDD4L. Interacts (via C-terminus) with EXOSC10 (via C-terminus); the interaction is facilitated by the association with RNA and promotes sumoylation of EXOSC10. Post-translationally, polyubiquitinated by NEDD4L, no effect on USP36 protein levels. Both proteins interact with and regulate each other's ubiquitination levels. Broadly expressed.

It is found in the nucleus. It localises to the nucleolus. The protein resides in the cytoplasm. The catalysed reaction is Thiol-dependent hydrolysis of ester, thioester, amide, peptide and isopeptide bonds formed by the C-terminal Gly of ubiquitin (a 76-residue protein attached to proteins as an intracellular targeting signal).. Its function is as follows. Deubiquitinase essential for the regulation of nucleolar structure and function. Required for cell and organism viability. Plays an important role in ribosomal RNA processing and protein synthesis, which is mediated, at least in part, through deubiquitination of DHX33, NPM1 and FBL, regulating their protein stability. Functions as a transcriptional repressor by deubiquiting histone H2B at the promoters of genes critical for cellular differentiation, such as CDKN1A, thereby preventing histone H3 'Lys-4' trimethylation (H3K4). Specifically deubiquitinates MYC in the nucleolus, leading to prevent MYC degradation by the proteasome: acts by specifically interacting with isoform 3 of FBXW7 (FBW7gamma) in the nucleolus and counteracting ubiquitination of MYC by the SCF(FBW7) complex. In contrast, it does not interact with isoform 1 of FBXW7 (FBW7alpha) in the nucleoplasm. Interacts to and regulates the actions of E3 ubiquitin-protein ligase NEDD4L over substrates such as NTRK1, KCNQ2 and KCNQ3, affecting their expression an functions. Deubiquitinates SOD2, regulates SOD2 protein stability. Deubiquitinase activity is required to control selective autophagy activation by ubiquitinated proteins. Promotes CEP63 stabilization through 'Lys-48'-linked deubiquitination leading to increased stability. Acts as a SUMO ligase to promote EXOSC10 sumoylation critical for the nucleolar RNA exosome function in rRNA processing. Binds to pre-rRNAs. In Homo sapiens (Human), this protein is Ubiquitin carboxyl-terminal hydrolase 36.